The sequence spans 262 residues: MLTLYSETFPSRLLLGTAAYPTPEILKQSVRTARPAMITVSLRRAGCGGEAHGQGFWSLLQETGVPVLPNTAGCQSVQEAVTTAQMAREVFETDWIKLELIGDDDTLQPDVFQLVEAAEILIKDGFKVLPYCTEDLIACRRLLDAGCQALMPWAAPIGTGLGAVHAYALNVLRERLPDTPLIIDAGLGLPSQAAQVMEWGFDGVLLNTAVSRSGDPVNMARAFALAVESGRLAFEAGPVEARDKAQASTPTVGQPFWHSAEY.

The Schiff-base intermediate with DXP role is filled by Lys-97. Residues Gly-158, 185–186 (AG), and 207–208 (NT) each bind 1-deoxy-D-xylulose 5-phosphate. Residues 243-262 (DKAQASTPTVGQPFWHSAEY) form a disordered region.

Belongs to the ThiG family. In terms of assembly, homotetramer. Forms heterodimers with either ThiH or ThiS.

The protein localises to the cytoplasm. It catalyses the reaction [ThiS sulfur-carrier protein]-C-terminal-Gly-aminoethanethioate + 2-iminoacetate + 1-deoxy-D-xylulose 5-phosphate = [ThiS sulfur-carrier protein]-C-terminal Gly-Gly + 2-[(2R,5Z)-2-carboxy-4-methylthiazol-5(2H)-ylidene]ethyl phosphate + 2 H2O + H(+). The protein operates within cofactor biosynthesis; thiamine diphosphate biosynthesis. Functionally, catalyzes the rearrangement of 1-deoxy-D-xylulose 5-phosphate (DXP) to produce the thiazole phosphate moiety of thiamine. Sulfur is provided by the thiocarboxylate moiety of the carrier protein ThiS. In vitro, sulfur can be provided by H(2)S. The polypeptide is Thiazole synthase (Neisseria meningitidis serogroup A / serotype 4A (strain DSM 15465 / Z2491)).